The chain runs to 292 residues: ATP synthase subunit a (292 aa).

7 helical membrane passes run 39-59 (QILGIFIVFVLLLTFFIFYKL), 73-93 (FLLLFQMLFVWVQDTTADLLG), 102-122 (YFLMLLLYIVSSNLVSLLGGI), 128-148 (SLTFTFSLGLATFIGIVVMGI), 172-192 (TFIPNPFSILSGFAPLFSISL), 196-216 (GNILAGTVILALFYNFWIFIF), and 231-251 (VFAGLITPVLHIYFDVIAGVL).

Belongs to the ATPase A chain family. F-type ATPases have 2 components, CF(1) - the catalytic core - and CF(0) - the membrane proton channel. CF(1) has five subunits: alpha(3), beta(3), gamma(1), delta(1), epsilon(1). CF(0) has three main subunits: a(1), b(2) and c(9-12). The alpha and beta chains form an alternating ring which encloses part of the gamma chain. CF(1) is attached to CF(0) by a central stalk formed by the gamma and epsilon chains, while a peripheral stalk is formed by the delta and b chains.

It localises to the cell membrane. In terms of biological role, key component of the proton channel; it plays a direct role in the translocation of protons across the membrane. The protein is ATP synthase subunit a of Mycoplasma genitalium (strain ATCC 33530 / DSM 19775 / NCTC 10195 / G37) (Mycoplasmoides genitalium).